The primary structure comprises 463 residues: Glutamate--tRNA ligase (463 aa).

The short motif at 8 to 18 (PSPTGYLHIGG) is the 'HIGH' region element. The short motif at 236 to 240 (RLSKR) is the 'KMSKS' region element. K239 contacts ATP.

This sequence belongs to the class-I aminoacyl-tRNA synthetase family. Glutamate--tRNA ligase type 1 subfamily. Monomer.

The protein localises to the cytoplasm. It catalyses the reaction tRNA(Glu) + L-glutamate + ATP = L-glutamyl-tRNA(Glu) + AMP + diphosphate. Functionally, catalyzes the attachment of glutamate to tRNA(Glu) in a two-step reaction: glutamate is first activated by ATP to form Glu-AMP and then transferred to the acceptor end of tRNA(Glu). This Nitrosomonas europaea (strain ATCC 19718 / CIP 103999 / KCTC 2705 / NBRC 14298) protein is Glutamate--tRNA ligase.